Here is a 270-residue protein sequence, read N- to C-terminus: Molybdenum storage protein subunit beta (270 aa).

In terms of assembly, octamer consisting of 4 alpha and 4 beta chains.

It localises to the cytoplasm. Its function is as follows. Intracellular storage of molybdenum. Binds polyoxomolybdates. Can bind at least 90 molybdenum atoms per protein molecule. The chain is Molybdenum storage protein subunit beta from Azotobacter vinelandii (strain DJ / ATCC BAA-1303).